A 314-amino-acid chain; its full sequence is Small ribosomal subunit biogenesis GTPase RsgA (314 aa).

The segment at 1 to 21 (MKRAPTKQPAKPAARGGERAQ) is disordered. Positions 85 to 246 (SDQFKSKLFA…LIDSPGFQEF (162 aa)) constitute a CP-type G domain. GTP-binding positions include 134–137 (NKID) and 188–196 (GQSGMGKST). Cys270, Cys275, His277, and Cys283 together coordinate Zn(2+).

It belongs to the TRAFAC class YlqF/YawG GTPase family. RsgA subfamily. In terms of assembly, monomer. Associates with 30S ribosomal subunit, binds 16S rRNA. Requires Zn(2+) as cofactor.

It localises to the cytoplasm. Functionally, one of several proteins that assist in the late maturation steps of the functional core of the 30S ribosomal subunit. Helps release RbfA from mature subunits. May play a role in the assembly of ribosomal proteins into the subunit. Circularly permuted GTPase that catalyzes slow GTP hydrolysis, GTPase activity is stimulated by the 30S ribosomal subunit. This chain is Small ribosomal subunit biogenesis GTPase RsgA, found in Burkholderia mallei (strain ATCC 23344).